Reading from the N-terminus, the 103-residue chain is Large ribosomal subunit protein bL21 (103 aa).

It belongs to the bacterial ribosomal protein bL21 family. In terms of assembly, part of the 50S ribosomal subunit. Contacts protein L20.

This protein binds to 23S rRNA in the presence of protein L20. This Klebsiella pneumoniae (strain 342) protein is Large ribosomal subunit protein bL21.